A 120-amino-acid polypeptide reads, in one-letter code: NAD(P)H-quinone oxidoreductase subunit 3, chloroplastic (120 aa).

The next 3 helical transmembrane spans lie at 9 to 29 (IFWA…IISG), 64 to 84 (MFAL…PWAM), and 88 to 108 (VLGV…IVGS).

It belongs to the complex I subunit 3 family. As to quaternary structure, NDH is composed of at least 16 different subunits, 5 of which are encoded in the nucleus.

The protein localises to the plastid. It is found in the chloroplast thylakoid membrane. It carries out the reaction a plastoquinone + NADH + (n+1) H(+)(in) = a plastoquinol + NAD(+) + n H(+)(out). The enzyme catalyses a plastoquinone + NADPH + (n+1) H(+)(in) = a plastoquinol + NADP(+) + n H(+)(out). Its function is as follows. NDH shuttles electrons from NAD(P)H:plastoquinone, via FMN and iron-sulfur (Fe-S) centers, to quinones in the photosynthetic chain and possibly in a chloroplast respiratory chain. The immediate electron acceptor for the enzyme in this species is believed to be plastoquinone. Couples the redox reaction to proton translocation, and thus conserves the redox energy in a proton gradient. This chain is NAD(P)H-quinone oxidoreductase subunit 3, chloroplastic, found in Lemna minor (Common duckweed).